Here is a 116-residue protein sequence, read N- to C-terminus: Appetite-regulating hormone (116 aa).

Residues 1–23 (MPAPRTICSLLLLSMLWMDLAMA) form the signal peptide. Ser-26 is lipidated: O-decanoyl serine; alternate. Ser-26 is lipidated: O-hexanoyl serine; alternate. Residue Ser-26 is the site of O-octanoyl serine; alternate attachment. The interval 29–67 (SPEHQKLQRKEPKKPSGRLKPRALEGQFDPDVGSQEEGA) is disordered. The span at 31–42 (EHQKLQRKEPKK) shows a compositional bias: basic and acidic residues. The propeptide at 51–74 (ALEGQFDPDVGSQEEGAEDELEIR) is removed in mature form. Leu-97 is subject to Leucine amide. A propeptide spans 98–116 (GKFLQDILWEEAEETLADE) (removed in mature form).

Belongs to the motilin family. Post-translationally, O-octanoylated by GOAT/MBOAT4. O-octanoylation is essential for ghrelin activity. In terms of processing, amidation of Leu-97 is essential for obestatin activity.

The protein localises to the secreted. Ghrelin is the ligand for growth hormone secretagogue receptor type 1 (GHSR). Induces the release of growth hormone from the pituitary. Has an appetite-stimulating effect, induces adiposity and stimulates gastric acid secretion. Involved in growth regulation. In terms of biological role, obestatin may be the ligand for GPR39. May have an appetite-reducing effect resulting in decreased food intake. May reduce gastric emptying activity and jejunal motility. The sequence is that of Appetite-regulating hormone (GHRL) from Capra hircus (Goat).